The chain runs to 425 residues: Septin-11 (425 aa).

Position 2 is an N-acetylalanine (Ala2). Ser9 is modified (phosphoserine). One can recognise a Septin-type G domain in the interval 38 to 304 (QGFCFNILCV…ELYRRCKLEE (267 aa)). The tract at residues 48 to 55 (GETGIGKS) is G1 motif. Residues 48–55 (GETGIGKS), Gly103, 184–192 (KADTIAKNE), Gly238, and Arg253 contribute to the GTP site. A G3 motif region spans residues 100–103 (DTVG). The interval 183–186 (AKAD) is G4 motif. The stretch at 320-410 (QETYEAKRNE…AAQLLQSQAQ (91 aa)) forms a coiled coil. Positions 399–425 (KAAAQLLQSQAQQSGAQQTKKDKDKKN) are disordered. Positions 401-416 (AAQLLQSQAQQSGAQQ) are enriched in low complexity.

This sequence belongs to the TRAFAC class TrmE-Era-EngA-EngB-Septin-like GTPase superfamily. Septin GTPase family. As to quaternary structure, septins polymerize into heterooligomeric protein complexes that form filaments, and can associate with cellular membranes, actin filaments and microtubules. Forms homooligomers. GTPase activity is required for filament formation. Interacts with SEPTIN7, SEPTIN9 and SEPTIN12.

The protein localises to the cytoplasm. The protein resides in the cytoskeleton. It is found in the synapse. It localises to the cell projection. Its subcellular location is the dendritic spine. The protein localises to the axon. In terms of biological role, filament-forming cytoskeletal GTPase. May play a role in cytokinesis (Potential). May play a role in the cytoarchitecture of neurons, including dendritic arborization and dendritic spines, and in GABAergic synaptic connectivity. In Bos taurus (Bovine), this protein is Septin-11.